The following is a 98-amino-acid chain: Small ribosomal subunit protein bS20 (98 aa).

It belongs to the bacterial ribosomal protein bS20 family.

Functionally, binds directly to 16S ribosomal RNA. This chain is Small ribosomal subunit protein bS20, found in Prochlorococcus marinus (strain NATL1A).